A 405-amino-acid polypeptide reads, in one-letter code: Phosphopentomutase (405 aa).

Residues Asp10, Asp305, His310, Asp346, His347, and His358 each coordinate Mn(2+).

The protein belongs to the phosphopentomutase family. Mn(2+) serves as cofactor.

It is found in the cytoplasm. The enzyme catalyses 2-deoxy-alpha-D-ribose 1-phosphate = 2-deoxy-D-ribose 5-phosphate. It carries out the reaction alpha-D-ribose 1-phosphate = D-ribose 5-phosphate. It functions in the pathway carbohydrate degradation; 2-deoxy-D-ribose 1-phosphate degradation; D-glyceraldehyde 3-phosphate and acetaldehyde from 2-deoxy-alpha-D-ribose 1-phosphate: step 1/2. In terms of biological role, isomerase that catalyzes the conversion of deoxy-ribose 1-phosphate (dRib-1-P) and ribose 1-phosphate (Rib-1-P) to deoxy-ribose 5-phosphate (dRib-5-P) and ribose 5-phosphate (Rib-5-P), respectively. The polypeptide is Phosphopentomutase (Methylorubrum extorquens (strain CM4 / NCIMB 13688) (Methylobacterium extorquens)).